The following is a 284-amino-acid chain: Homeobox protein SIX1 (284 aa).

A DNA-binding region (homeobox) is located at residues 124–183 (GEETSYCFKEKSRGVLREWYAHNPYPSPREKRELAEATGLTTTQVSNWFKNRRQRDRAAE). A disordered region spans residues 168-284 (VSNWFKNRRQ…LTSSLVDLGS (117 aa)). Over residues 179 to 190 (DRAAEAKERENT) the composition is skewed to basic and acidic residues. Polar residues predominate over residues 227 to 284 (DQNSVLLLQSNMGHARSSNYSLPGLTASQPSHGLQAHQHQLQDSLLGPLTSSLVDLGS).

Belongs to the SIX/Sine oculis homeobox family. Interacts with DACH1. Interacts with EYA1. Interacts with EYA2. Interacts with CDH1. Interacts with TBX18. Interacts with CEBPA. Interacts with CEBPB. Interacts with EBF2. Post-translationally, phosphorylated during interphase; becomes hyperphosphorylated during mitosis. Hyperphosphorylation impairs binding to promoter elements. In terms of processing, ubiquitinated by the anaphase promoting complex (APC), leading to its proteasomal degradation. Expressed in phalangeal tendons and in skeletal muscle and in head and body mesenchyme.

It localises to the nucleus. The protein resides in the cytoplasm. Transcription factor that is involved in the regulation of cell proliferation, apoptosis and embryonic development. Plays an important role in the development of several organs, including kidney, muscle and inner ear. Depending on context, functions as a transcriptional repressor or activator. Lacks an activation domain, and requires interaction with EYA family members for transcription activation. Mediates nuclear translocation of EYA1 and EYA2. Binds the 5'-TCA[AG][AG]TTNC-3' motif present in the MEF3 element in the MYOG promoter and CIDEA enhancer. Regulates the expression of numerous genes, including MYC, CCNA1, CCND1 and EZR. Acts as an activator of the IGFBP5 promoter, probably coactivated by EYA2. Repression of precursor cell proliferation in myoblasts is switched to activation through recruitment of EYA3 to the SIX1-DACH1 complex. During myogenesis, seems to act together with EYA2 and DACH2. Regulates the expression of CCNA1. Promotes brown adipocyte differentiation. The polypeptide is Homeobox protein SIX1 (Six1) (Mus musculus (Mouse)).